Consider the following 807-residue polypeptide: Glycerol-3-phosphate acyltransferase (807 aa).

The short motif at 305–310 is the HXXXXD motif element; sequence CHRSHM.

It belongs to the GPAT/DAPAT family.

Its subcellular location is the cell inner membrane. The catalysed reaction is sn-glycerol 3-phosphate + an acyl-CoA = a 1-acyl-sn-glycero-3-phosphate + CoA. Its pathway is phospholipid metabolism; CDP-diacylglycerol biosynthesis; CDP-diacylglycerol from sn-glycerol 3-phosphate: step 1/3. In Vibrio atlanticus (strain LGP32) (Vibrio splendidus (strain Mel32)), this protein is Glycerol-3-phosphate acyltransferase.